The sequence spans 122 residues: Large ribosomal subunit protein uL14c (122 aa).

It belongs to the universal ribosomal protein uL14 family. As to quaternary structure, part of the 50S ribosomal subunit.

Its subcellular location is the plastid. The protein resides in the cyanelle. In terms of biological role, binds to 23S rRNA. The sequence is that of Large ribosomal subunit protein uL14c from Cyanophora paradoxa.